A 503-amino-acid polypeptide reads, in one-letter code: Cytochrome P450 monooxygenase ecdH (503 aa).

A helical membrane pass occupies residues 8-24 (TTLLCGVISSTLLLLLL). Residues N64, N324, and N413 are each glycosylated (N-linked (GlcNAc...) asparagine). C449 lines the heme pocket.

It belongs to the cytochrome P450 family. The cofactor is heme.

The protein resides in the membrane. It participates in antifungal biosynthesis. Cytochrome P450 monooxygenase; part of the gene cluster that mediates the biosynthesis of echinocandin B, a fungal lipidated cyclic hexapeptide that acts as an antifungal agent. Linoleoyl-AMP, produced by the fatty-acyl-AMP ligase ecdI, is transferred to the initiation carrier domain (T0) of ecdA. The linoleoyl-S-phosphopantetheinyl-T0 is sequentially extended with L-ornithine, L-threonine, L-proline, L-homotyrosine, L-threonine, and 4R-methyl-L-proline to form the linear hexapeptide. Thereafter, the terminal condensation (C7) performs macrocyclization of the NRPS product and the cyclic scaffold is released from ecdA. All six of the amino acid residues are hydroxylated, including 4R,5R-dihydroxy-L-ornithine, 4R-hydroxyl-L-proline, 3S,4S-dihydroxy-L-homotyrosine, and 3S-hydroxyl-4S-methyl-L-prolin. In the pathway, all the hydroxylation reactions are proposed to occur following completion of the cyclic peptide, so the unhydroxylated precursor produced by ecdA will undergo six rounds of hydroxylation. Five hydroxylase genes (ecdG, ecdH, ecdK, htyE and htyF) are embedded within the echinocandin B (ecd) and L-homotyrosine (hty) clusters. This Aspergillus rugulosus (Emericella rugulosa) protein is Cytochrome P450 monooxygenase ecdH.